We begin with the raw amino-acid sequence, 82 residues long: Beta-insect depressant toxin LqqIT2 (82 aa).

The first 21 residues, 1–21 (MKLLLLLIVSASMLIESLVNA), serve as a signal peptide directing secretion. An LCN-type CS-alpha/beta domain is found at 22-82 (DGYIRKRDGC…TWKSETNTCG (61 aa)). 4 cysteine pairs are disulfide-bonded: C31–C81, C35–C56, C42–C63, and C46–C65.

Belongs to the long (4 C-C) scorpion toxin superfamily. Sodium channel inhibitor family. Beta subfamily. As to expression, expressed by the venom gland.

Its subcellular location is the secreted. Functionally, depressant insect beta-toxins cause a transient contraction paralysis followed by a slow flaccid paralysis. They bind voltage-independently at site-4 of sodium channels and shift the voltage of activation toward more negative potentials thereby affecting sodium channel activation and promoting spontaneous and repetitive firing. Aside from typical beta-toxin effects, this toxin also affects the inactivation process and ion selectivity of the insect voltage-gated sodium channel. This toxin is active only on insects. Is active on the insect voltage-gated sodium channel para. In vivo, when injected intraperitoneally, it exhibits analgesic activity, increasing hot plate and tail flick withdrawal latencies in a dose-dependent fashion. This phenomenon might be partly due to an inhibitory mechanism activated by noxious stimuli. The polypeptide is Beta-insect depressant toxin LqqIT2 (Leiurus quinquestriatus quinquestriatus (Egyptian scorpion)).